Here is a 279-residue protein sequence, read N- to C-terminus: NADPH-dependent 7-cyano-7-deazaguanine reductase (279 aa).

86 to 88 (IES) contacts substrate. 88–89 (SK) contributes to the NADPH binding site. Cys-187 (thioimide intermediate) is an active-site residue. Asp-194 acts as the Proton donor in catalysis. Residue 226-227 (HE) participates in substrate binding. Position 255–256 (255–256 (RG)) interacts with NADPH.

Belongs to the GTP cyclohydrolase I family. QueF type 2 subfamily. In terms of assembly, homodimer.

It localises to the cytoplasm. The enzyme catalyses 7-aminomethyl-7-carbaguanine + 2 NADP(+) = 7-cyano-7-deazaguanine + 2 NADPH + 3 H(+). Its pathway is tRNA modification; tRNA-queuosine biosynthesis. Its function is as follows. Catalyzes the NADPH-dependent reduction of 7-cyano-7-deazaguanine (preQ0) to 7-aminomethyl-7-deazaguanine (preQ1). The chain is NADPH-dependent 7-cyano-7-deazaguanine reductase from Haemophilus influenzae (strain ATCC 51907 / DSM 11121 / KW20 / Rd).